Reading from the N-terminus, the 600-residue chain is Integrator complex subunit 11 (600 aa).

His-68, His-70, Asp-72, His-73, His-157, and Asp-178 together coordinate Zn(2+). The HXHXDH motif signature appears at 68-73; sequence HFHLDH. The active site involves Glu-203. His-414 is a binding site for Zn(2+). The Nuclear localization signal signature appears at 469 to 479; the sequence is LLPDAKKPKLM.

The protein belongs to the metallo-beta-lactamase superfamily. RNA-metabolizing metallo-beta-lactamase-like family. INTS11 subfamily. In terms of assembly, component of the Integrator complex, composed of core subunits INTS1, INTS2, INTS3, INTS4, INTS5, INTS6, INTS7, INTS8, INTS9/RC74, INTS10, INTS11/CPSF3L, INTS12, INTS13, INTS14 and INTS15. The core complex associates with protein phosphatase 2A subunits PPP2CA and PPP2R1A, to form the Integrator-PP2A (INTAC) complex. INTS11 is part of the RNA endonuclease subcomplex, composed of INTS4, INTS9, INTS11 and inositol hexakisphosphate (InsP6). Zn(2+) is required as a cofactor.

It localises to the nucleus. The protein localises to the cytoplasm. In terms of biological role, RNA endonuclease component of the integrator complex, a multiprotein complex that terminates RNA polymerase II (Pol II) transcription in the promoter-proximal region of genes. The integrator complex provides a quality checkpoint during transcription elongation by driving premature transcription termination of transcripts that are unfavorably configured for transcriptional elongation: the complex terminates transcription by (1) catalyzing dephosphorylation of the C-terminal domain (CTD) of Pol II subunit POLR2A/RPB1 and SUPT5H/SPT5, (2) degrading the exiting nascent RNA transcript via endonuclease activity and (3) promoting the release of Pol II from bound DNA. The integrator complex is also involved in terminating the synthesis of non-coding Pol II transcripts, such as enhancer RNAs (eRNAs), small nuclear RNAs (snRNAs), telomerase RNAs and long non-coding RNAs (lncRNAs). Within the integrator complex, INTS11 constitutes the RNA endonuclease subunit that degrades exiting nascent RNA transcripts. This Gallus gallus (Chicken) protein is Integrator complex subunit 11 (INTS11).